The following is a 76-amino-acid chain: MKLTCMVIVAVLFLTANTFVTAVPHSSNALENLYLKAHHEMNNPKDSELNKRCYDGGTGCDSGNQCCSGWCIFVCL.

The N-terminal stretch at 1 to 22 (MKLTCMVIVAVLFLTANTFVTA) is a signal peptide. The propeptide occupies 23–52 (VPHSSNALENLYLKAHHEMNNPKDSELNKR). Intrachain disulfides connect cysteine 53–cysteine 67, cysteine 60–cysteine 71, and cysteine 66–cysteine 75.

Belongs to the conotoxin O1 superfamily. In terms of tissue distribution, expressed by the venom duct.

The protein resides in the secreted. In Conus victoriae (Queen Victoria cone), this protein is Conotoxin Vc6.6.